Here is a 368-residue protein sequence, read N- to C-terminus: MSAELNQPVPRPGILDIAAYVPGKEHVDGVAKVYKLSSNETPLGPSPKAIEAFSAAASHLEIYPDGQAIALRQAIADVHGLNIANILCGNGSDELLGLLCHVYLGAGDEAIITEHGFLVYKIQIMGAGATPVTVKEKDCVVDVDAILAAVTPKTKMVFLANPGNPTGTYVPVAEIRRLQAGLPKHVVLVLDAAYAEYVRKNDYEAGLELVSGNRNVVMTRTFSKVYGLAALRVGWMYAPVDIIDALNRVRGPFNMSAPAIAAGAAAIRDQAFVQKAVAHNALWMEKLVTTFTGLGLTVTPSVANFILIHFPDQDGKRATDADEFLSRRGYILRAVRGYGFPNALRMTVGSEEANLGVIAALTEFMGQA.

The residue at position 224 (Lys224) is an N6-(pyridoxal phosphate)lysine.

This sequence belongs to the class-II pyridoxal-phosphate-dependent aminotransferase family. Histidinol-phosphate aminotransferase subfamily. As to quaternary structure, homodimer. Pyridoxal 5'-phosphate is required as a cofactor.

It catalyses the reaction L-histidinol phosphate + 2-oxoglutarate = 3-(imidazol-4-yl)-2-oxopropyl phosphate + L-glutamate. Its pathway is amino-acid biosynthesis; L-histidine biosynthesis; L-histidine from 5-phospho-alpha-D-ribose 1-diphosphate: step 7/9. This chain is Histidinol-phosphate aminotransferase, found in Agrobacterium fabrum (strain C58 / ATCC 33970) (Agrobacterium tumefaciens (strain C58)).